A 398-amino-acid polypeptide reads, in one-letter code: Trans-2-enoyl-CoA reductase [NADH] (398 aa).

Residues glycine 47–phenylalanine 52, phenylalanine 74–glutamate 75, aspartate 111–alanine 112, and leucine 139–alanine 140 each bind NAD(+). Tyrosine 225 lines the substrate pocket. Residue tyrosine 235 is the Proton donor of the active site. NAD(+) contacts are provided by residues lysine 244 and isoleucine 274–threonine 276.

It belongs to the TER reductase family. Monomer.

It catalyses the reaction a 2,3-saturated acyl-CoA + NAD(+) = a (2E)-enoyl-CoA + NADH + H(+). Its pathway is lipid metabolism; fatty acid biosynthesis. Its function is as follows. Involved in the fatty acid synthesis (FAS II). Catalyzes the reduction of a carbon-carbon double bond in an enoyl moiety that is covalently linked to a coenzyme A (CoA). The polypeptide is Trans-2-enoyl-CoA reductase [NADH] (Clostridium beijerinckii (strain ATCC 51743 / NCIMB 8052) (Clostridium acetobutylicum)).